We begin with the raw amino-acid sequence, 445 residues long: D-serine dehydratase (445 aa).

N6-(pyridoxal phosphate)lysine is present on Lys118.

The protein belongs to the serine/threonine dehydratase family. DsdA subfamily. As to quaternary structure, monomer. The cofactor is pyridoxal 5'-phosphate.

The enzyme catalyses D-serine = pyruvate + NH4(+). This Serratia proteamaculans (strain 568) protein is D-serine dehydratase.